Reading from the N-terminus, the 315-residue chain is Aspartate carbamoyltransferase catalytic subunit (315 aa).

Residues Arg-64 and Thr-65 each contribute to the carbamoyl phosphate site. An L-aspartate-binding site is contributed by Lys-92. Residues Arg-114, His-142, and Gln-145 each contribute to the carbamoyl phosphate site. Positions 175 and 229 each coordinate L-aspartate. Carbamoyl phosphate is bound by residues Gly-270 and Pro-271.

The protein belongs to the aspartate/ornithine carbamoyltransferase superfamily. ATCase family. As to quaternary structure, heterododecamer (2C3:3R2) of six catalytic PyrB chains organized as two trimers (C3), and six regulatory PyrI chains organized as three dimers (R2).

It carries out the reaction carbamoyl phosphate + L-aspartate = N-carbamoyl-L-aspartate + phosphate + H(+). It participates in pyrimidine metabolism; UMP biosynthesis via de novo pathway; (S)-dihydroorotate from bicarbonate: step 2/3. Functionally, catalyzes the condensation of carbamoyl phosphate and aspartate to form carbamoyl aspartate and inorganic phosphate, the committed step in the de novo pyrimidine nucleotide biosynthesis pathway. The sequence is that of Aspartate carbamoyltransferase catalytic subunit from Methylorubrum extorquens (strain CM4 / NCIMB 13688) (Methylobacterium extorquens).